The chain runs to 247 residues: Adenosylcobinamide-GDP ribazoletransferase (247 aa).

6 helical membrane-spanning segments follow: residues 31-51 (ILFY…VTCI), 55-75 (LPAL…TGGL), 109-129 (IGVL…YVLI), 135-155 (LFLI…FLTT), 183-203 (VLLL…SFLI), and 227-247 (AIEI…FYLV).

This sequence belongs to the CobS family. Requires Mg(2+) as cofactor.

It localises to the cell inner membrane. The enzyme catalyses alpha-ribazole + adenosylcob(III)inamide-GDP = adenosylcob(III)alamin + GMP + H(+). The catalysed reaction is alpha-ribazole 5'-phosphate + adenosylcob(III)inamide-GDP = adenosylcob(III)alamin 5'-phosphate + GMP + H(+). Its pathway is cofactor biosynthesis; adenosylcobalamin biosynthesis; adenosylcobalamin from cob(II)yrinate a,c-diamide: step 7/7. In terms of biological role, joins adenosylcobinamide-GDP and alpha-ribazole to generate adenosylcobalamin (Ado-cobalamin). Also synthesizes adenosylcobalamin 5'-phosphate from adenosylcobinamide-GDP and alpha-ribazole 5'-phosphate. In Acinetobacter baumannii (strain ACICU), this protein is Adenosylcobinamide-GDP ribazoletransferase.